The sequence spans 528 residues: Facilitator of iron transport 1 (528 aa).

Positions 1–18 are cleaved as a signal peptide; sequence MKLSSAFVLSAITVAALG. 3 consecutive repeat copies span residues 20–98, 99–168, and 169–233. The segment at 20–274 is 4 X approximate tandem repeats; the sequence is SITTTITATK…ERAPASTVAT (255 aa). Disordered regions lie at residues 79–100, 145–172, and 214–234; these read SIVE…GSSI, AAET…SITT, and ASPV…SGSS. 2 stretches are compositionally biased toward polar residues: residues 81 to 93 and 145 to 163; these read VEPS…TSAD and AAET…TSAD. Residues 234-274 form a 1-4; truncated repeat; it reads SITTTITATKNGHVYTKTVTQDATFVWTGEGERAPASTVAT. Repeat copies occupy residues 289 to 294, 295 to 300, 301 to 306, 307 to 312, 313 to 318, 319 to 324, 325 to 330, 331 to 336, 337 to 342, 343 to 348, 349 to 353, and 354 to 359. Positions 289–359 are 12 X 6 AA approximate tandem repeats, Ser/Thr-rich; sequence SIVEASSAVE…AVETSAVETS (71 aa). 2 stretches are compositionally biased toward low complexity: residues 298–388 and 398–435; these read ETSS…QASS and TSSV…SSAT. Residues 298–471 are disordered; that stretch reads ETSSAAETSS…SNNWSSSSSA (174 aa). The N-linked (GlcNAc...) asparagine glycan is linked to Asn-412. Residues 446–457 show a composition bias toward polar residues; that stretch reads YTESSSRDAQSV. The span at 462 to 471 shows a compositional bias: low complexity; the sequence is SNNWSSSSSA. Residue Asn-464 is glycosylated (N-linked (GlcNAc...) asparagine). 488-495 is an ATP binding site; that stretch reads GIFTNGKS. N-linked (GlcNAc...) asparagine glycosylation occurs at Asn-503. The GPI-anchor amidated glycine moiety is linked to residue Gly-506. The propeptide at 507–528 is removed in mature form; it reads AADSIAAGTGLMGAALAAVIFL.

In terms of processing, the GPI-anchor is attached to the protein in the endoplasmic reticulum and serves to target the protein to the cell surface. There, the glucosamine-inositol phospholipid moiety is cleaved off and the GPI-modified mannoprotein is covalently attached via its lipidless GPI glycan remnant to the 1,6-beta-glucan of the outer cell wall layer.

The protein localises to the secreted. The protein resides in the cell wall. Its subcellular location is the membrane. Functionally, involved in the uptake of non-siderophore sources of iron and the siderophores ferrioxamine B and ferrichrome. Has a role in the retention of iron in the cell wall and periplasmic space. The chain is Facilitator of iron transport 1 (FIT1) from Saccharomyces cerevisiae (strain ATCC 204508 / S288c) (Baker's yeast).